Reading from the N-terminus, the 131-residue chain is Small ribosomal subunit protein uS19 (131 aa).

This sequence belongs to the universal ribosomal protein uS19 family.

Functionally, protein S19 forms a complex with S13 that binds strongly to the 16S ribosomal RNA. The chain is Small ribosomal subunit protein uS19 from Nitrosopumilus maritimus (strain SCM1).